The sequence spans 174 residues: Probable calcium-binding protein CML20 (174 aa).

Residue Gly-2 is the site of N-myristoyl glycine attachment. A disordered region spans residues 14-35 (LRRSRSRSPPPAVLDPSQSPLS). EF-hand domains are found at residues 39–74 (EAEPELIRVFRCFDTDGDGLISAAEMREFYGCSVDE), 75–100 (AEEMVAAADRDGDGFVSIEELRAVME), 102–137 (GGLDALRAAFDEYDEDGNGVITAEELRRALRRLNLD), and 141–174 (LTAEQCAEIVAAVDSDGDGVISFDEFKAMMSKQA). Asp-52, Asp-54, Asp-56, Glu-63, Asp-83, Asp-85, Asp-87, Glu-94, Asp-115, Asp-117, Asn-119, Glu-126, Asp-154, Asp-156, Asp-158, and Glu-165 together coordinate Ca(2+).

Its function is as follows. Potential calcium sensor. This is Probable calcium-binding protein CML20 (CML20) from Oryza sativa subsp. japonica (Rice).